Here is a 246-residue protein sequence, read N- to C-terminus: tRNA (guanine-N(1)-)-methyltransferase (246 aa).

Residues Gly-113 and 133 to 138 (IGDYVL) contribute to the S-adenosyl-L-methionine site.

This sequence belongs to the RNA methyltransferase TrmD family. As to quaternary structure, homodimer.

The protein localises to the cytoplasm. The catalysed reaction is guanosine(37) in tRNA + S-adenosyl-L-methionine = N(1)-methylguanosine(37) in tRNA + S-adenosyl-L-homocysteine + H(+). In terms of biological role, specifically methylates guanosine-37 in various tRNAs. This chain is tRNA (guanine-N(1)-)-methyltransferase, found in Haemophilus influenzae (strain PittGG).